The primary structure comprises 163 residues: Nucleotide-binding protein Bcer98_0876 (163 aa).

Belongs to the YajQ family.

Nucleotide-binding protein. The sequence is that of Nucleotide-binding protein Bcer98_0876 from Bacillus cytotoxicus (strain DSM 22905 / CIP 110041 / 391-98 / NVH 391-98).